Here is a 585-residue protein sequence, read N- to C-terminus: MKRLLTVLVVGLVALVSGCAGIPSSSSPQAIGTVERPAPPSLPKPTPDMDPDVLLREFLKATADPANRHLAARQFLTESASSAWDDAGSALLIDRVVFVETRSTDRVSVSMRADILGSLSDLGVFETGEGALPDPGPIELVKTSGGWRIDRLPNGVFLDWQQFQATYKRYTLYFVDPTGTTVVPDPRYVAVSDPDQLATELVSKLIAGPRPEMERSVRNLLDPPLKLRGPVTRADGGKTGVGRGYGGARIDLENLSASDPHSRQLLAAQLIWTLSRAGVAGPYVINVDGAPLDDRFADGWETSDVAATDPGAAPGAAAGLHALVNGSLVSLDGQRAPRVPGAFGQAPHQVSASVSRNGQDAASVVAPPGAPDPAATLWIGPLGGSTVQAMEGRTLSRPSWSLDQAVWVVADGINVVRAIRDASGTPARIPVDSSAVSSRYPGPISDLQLSRDGTRAAMVIEGQVILAGIEQTQDGRFLLTYPRRLGFGLGNSAVSLSWRTGDDIVVSRTDPEHPVSYVNLDGVNSDAPSRNLVMPVSVVAANPSTVYVADQRGVKQLSASADEENSGWVEVSPLMVPGSLPVLPG.

An N-terminal signal peptide occupies residues 1–18 (MKRLLTVLVVGLVALVSG). Cysteine 19 carries the N-palmitoyl cysteine lipid modification. Cysteine 19 carries S-diacylglycerol cysteine lipidation. The tract at residues 24–46 (SSSSPQAIGTVERPAPPSLPKPT) is disordered. The span at 37–46 (PAPPSLPKPT) shows a compositional bias: pro residues.

Belongs to the LpqB lipoprotein family. As to quaternary structure, interacts with MtrB, probably extracytoplasmically via its sensor domain.

Its subcellular location is the cell membrane. It localises to the secreted. The protein localises to the cell wall. In terms of biological role, may modulate activity of the MtrAB system in controlling homeostasis of the cell wall and cell division. This chain is Lipoprotein LpqB, found in Mycolicibacterium smegmatis (strain ATCC 700084 / mc(2)155) (Mycobacterium smegmatis).